A 147-amino-acid chain; its full sequence is MEVILKEDIKGLGYKNDLVQVKAGYGNNFLIPRGYAINATVSAKKVVAENIKQAAHKAEKLKKDAVATSEKIAGLALEIAAKVGDTGKIFGAVTSLQISDALAKKGISVDRKKIAFKGDVKDAGEHTALIDLHKEVKVELKFTVVAE.

This sequence belongs to the bacterial ribosomal protein bL9 family.

Binds to the 23S rRNA. The polypeptide is Large ribosomal subunit protein bL9 (Cytophaga hutchinsonii (strain ATCC 33406 / DSM 1761 / CIP 103989 / NBRC 15051 / NCIMB 9469 / D465)).